The chain runs to 246 residues: Tyrosine recombinase XerD-like (246 aa).

A Core-binding (CB) domain is found at 1–72; sequence MINDINNFIE…AVNQFLFFLY (72 aa). The Tyr recombinase domain occupies 84–246; the sequence is QETEKITLTQ…TPITLERYYR (163 aa). Active-site residues include K149 and R212. Y244 serves as the catalytic O-(3'-phospho-DNA)-tyrosine intermediate.

This sequence belongs to the 'phage' integrase family. XerD-like subfamily.

The protein localises to the cytoplasm. Its function is as follows. Putative tyrosine recombinase. Not involved in the cutting and rejoining of the recombining DNA molecules on dif(SL) site. This chain is Tyrosine recombinase XerD-like, found in Streptococcus agalactiae serotype III (strain NEM316).